Consider the following 340-residue polypeptide: MDQTLTHTGSKKACVIGGTGNLASILIKHLLQSGYKVNTTVRDPENEKKIAHLRKLQELGDLKIFKADLTDEDSFESSFSGCEYIFHVATPINFKSEDPEKDMIKPAIQGVINVLKSCLKSKSVKRVIYTSSAAAVSINNLSGTGIVMNEENWTDVEFLTEEKPFNWGYPISKVLAEKTAWEFAKENKINLVTVIPALIAGNSLLSDPPSSLSLSMSFITGKEMHVTGLKEMQKLSGSISFVHVDDLARAHLFLAEKETASGRYICCAYNTSVPEIADFLIQRYPKYNVLSEFEEGLSIPKLTLSSQKLINEGFRFEYGINEMYDQMIEYFESKGLIKAK.

Residues Lys49 and Tyr169 each coordinate NADP(+).

Belongs to the NAD(P)-dependent epimerase/dehydratase family. Dihydroflavonol-4-reductase subfamily. As to quaternary structure, homo- or heterodimer. As to expression, flowers and young siliques. Detected specifically in the endothelium of seed coat.

The catalysed reaction is a (2R,3R)-flavan-3-ol + 2 NAD(+) = an anthocyanidin with a 3-hydroxy group + 2 NADH + 2 H(+). It catalyses the reaction a (2R,3R)-flavan-3-ol + 2 NADP(+) = an anthocyanidin with a 3-hydroxy group + 2 NADPH + 2 H(+). The protein operates within secondary metabolite biosynthesis; flavonoid biosynthesis. Its activity is regulated as follows. Inhibited by (+)-catechin, quercetin and (+)- and (-)-dihydroquercetin. Not inhibited by salt. Positive cooperativity with NADPH acting as cosubstrate and modulator. Functionally, involved in the biosynthesis of condensed tannins. Converts cyanidin into (-)-epicatechin as the major product. The polypeptide is Anthocyanidin reductase (BAN) (Arabidopsis thaliana (Mouse-ear cress)).